Here is a 331-residue protein sequence, read N- to C-terminus: Probable allantoicase (331 aa).

This sequence belongs to the allantoicase family.

The enzyme catalyses allantoate + H2O = (S)-ureidoglycolate + urea. Its pathway is nitrogen metabolism; (S)-allantoin degradation; (S)-ureidoglycolate from allantoate (aminidohydrolase route): step 1/1. The polypeptide is Probable allantoicase (Pseudomonas fluorescens (strain ATCC BAA-477 / NRRL B-23932 / Pf-5)).